The chain runs to 259 residues: Ribosomal RNA small subunit methyltransferase A (259 aa).

Positions 13, 15, 39, 60, 84, and 101 each coordinate S-adenosyl-L-methionine.

Belongs to the class I-like SAM-binding methyltransferase superfamily. rRNA adenine N(6)-methyltransferase family. RsmA subfamily.

It is found in the cytoplasm. It catalyses the reaction adenosine(1518)/adenosine(1519) in 16S rRNA + 4 S-adenosyl-L-methionine = N(6)-dimethyladenosine(1518)/N(6)-dimethyladenosine(1519) in 16S rRNA + 4 S-adenosyl-L-homocysteine + 4 H(+). In terms of biological role, specifically dimethylates two adjacent adenosines (A1518 and A1519) in the loop of a conserved hairpin near the 3'-end of 16S rRNA in the 30S particle. May play a critical role in biogenesis of 30S subunits. The chain is Ribosomal RNA small subunit methyltransferase A from Mesomycoplasma hyopneumoniae (strain J / ATCC 25934 / NCTC 10110) (Mycoplasma hyopneumoniae).